Reading from the N-terminus, the 300-residue chain is Cation-efflux pump FieF (300 aa).

4 helical membrane passes run 12–32 (AAIA…FAWW), 39–59 (ILAA…NLLV), 82–102 (AALA…LTGI), and 114–134 (PGVG…LVSF). Zn(2+) is bound by residues Asp-45 and Asp-49. Zn(2+) is bound by residues His-153 and Asp-157. Helical transmembrane passes span 156 to 176 (SDVM…YGWH) and 178 to 198 (ADAL…LRMG).

The protein belongs to the cation diffusion facilitator (CDF) transporter (TC 2.A.4) family. FieF subfamily. As to quaternary structure, homodimer.

The protein resides in the cell inner membrane. It carries out the reaction Zn(2+)(in) + H(+)(out) = Zn(2+)(out) + H(+)(in). It catalyses the reaction Cd(2+)(in) + H(+)(out) = Cd(2+)(out) + H(+)(in). The enzyme catalyses Fe(2+)(in) + H(+)(out) = Fe(2+)(out) + H(+)(in). Its function is as follows. Divalent metal cation transporter which exports Zn(2+), Cd(2+) and possibly Fe(2+). May be involved in zinc and iron detoxification by efflux. The polypeptide is Cation-efflux pump FieF (Escherichia coli O157:H7 (strain EC4115 / EHEC)).